The chain runs to 390 residues: Putative MSV199 domain-containing protein 211L (390 aa).

Residues 181 to 263 are a coiled coil; sequence HDRKAQEEKE…FDLSDVRDRL (83 aa).

This chain is Putative MSV199 domain-containing protein 211L, found in Acheta domesticus (House cricket).